Consider the following 570-residue polypeptide: MAQEVSEYLSQNPRVAAWVETLRCEGETDKHWRHRREFLLRNAGDLVPATEETADAESGARSRQLQQLVSFSMAWANHVFLGCRYPQKVMDKILSMAEGIKVTDAPIHTTRDELVAKVKKRGISSSNEGVEEPSKKRSIEGKNNSSVERDHGKKSAKTDRSAQQENSSGSKGSSTKSESSGTSARSNSGVSHQNSSTSEGDRSVCSQSSSNSSQVTSAGSGKASEPEAPDKHGSASFVSSLLKSSLNSHVTKSTDSRQHSGSPRKNALEGSSVSVSQSSSEIEVPLLGSSGSSEVELPLLSCKSSSETASSGLTTKASSEANISSSVSKNSSSSGTSLLMPKSSSTNTSLLTSQVAASLLASKSSSQSSGSVASKSTSLGSMSQLASKSSSQSSTSQLPSKSTSQSSESSVKFTCRKLTNEDIKQKQPFFNRLYKTVAWKLVAVGGFSPNVNHGELLNAAIEALKATLDVFFVPLKELADLPQNKSSQESIVCELRCKSVYLGTGCGKSKENAKAVASREALKLFLKKKVVVKICKRKYRGNEIEDLVLLDEESRPVNLPPALKHPQELL.

At Ala2 the chain carries N-acetylalanine. The XRN2-binding (XTBD) domain maps to 19–126 (VETLRCEGET…KVKKRGISSS (108 aa)). The disordered stretch occupies residues 122–345 (GISSSNEGVE…TSLLMPKSSS (224 aa)). Ser124 is modified (phosphoserine). Over residues 147–162 (VERDHGKKSAKTDRSA) the composition is skewed to basic and acidic residues. Positions 167–183 (SSGSKGSSTKSESSGTS) are enriched in low complexity. Lys176 participates in a covalent cross-link: Glycyl lysine isopeptide (Lys-Gly) (interchain with G-Cter in SUMO1). Over residues 184–198 (ARSNSGVSHQNSSTS) the composition is skewed to polar residues. The span at 203-221 (SVCSQSSSNSSQVTSAGSG) shows a compositional bias: low complexity. Basic and acidic residues predominate over residues 224-233 (SEPEAPDKHG). Ser234 carries the phosphoserine modification. Low complexity-rich tracts occupy residues 234 to 248 (SASFVSSLLKSSLNS) and 271 to 301 (SSVSVSQSSSEIEVPLLGSSGSSEVELPLLS). Residues 302 to 317 (CKSSSETASSGLTTKA) are compositionally biased toward polar residues. Positions 318-345 (SSEANISSSVSKNSSSSGTSLLMPKSSS) are enriched in low complexity. Ser378 is subject to Phosphoserine. The interval 383–407 (SQLASKSSSQSSTSQLPSKSTSQSS) is disordered. The DRBM domain occupies 452 to 527 (NHGELLNAAI…SREALKLFLK (76 aa)).

Belongs to the CARF family. Interacts with CDKN2A/p14ARF, p53/TP53 and MDM2. Interacts with CHEK2 and MAPK3. Interacts with XRN2. In terms of processing, may be ubiquitinated.

It is found in the nucleus. The protein resides in the nucleoplasm. Its function is as follows. Regulates DNA damage response and cell proliferation in a dose-dependent manner through a number of signaling pathways involved in cell proliferation, apoptosis and senescence. The sequence is that of CDKN2A-interacting protein (Cdkn2aip) from Rattus norvegicus (Rat).